Consider the following 343-residue polypeptide: Methionine import ATP-binding protein MetN (343 aa).

The ABC transporter domain maps to 2–241; it reads IKLSNITKVF…PKTPLAQKFI (240 aa). Residue 38-45 coordinates ATP; the sequence is GASGAGKS.

This sequence belongs to the ABC transporter superfamily. Methionine importer (TC 3.A.1.24) family. The complex is composed of two ATP-binding proteins (MetN), two transmembrane proteins (MetI) and a solute-binding protein (MetQ).

It localises to the cell inner membrane. The enzyme catalyses L-methionine(out) + ATP + H2O = L-methionine(in) + ADP + phosphate + H(+). It catalyses the reaction D-methionine(out) + ATP + H2O = D-methionine(in) + ADP + phosphate + H(+). Part of the ABC transporter complex MetNIQ involved in methionine import. Responsible for energy coupling to the transport system. This is Methionine import ATP-binding protein MetN from Escherichia coli O6:K15:H31 (strain 536 / UPEC).